Here is a 227-residue protein sequence, read N- to C-terminus: YEATS domain-containing protein 4 (227 aa).

Residues 15-158 enclose the YEATS domain; sequence RVKGVTIVKP…AMMQQLLTTS (144 aa). Residue Lys-37 forms a Glycyl lysine isopeptide (Lys-Gly) (interchain with G-Cter in SUMO2) linkage. Residues 93–97 are diacetylated histone H3 binding; the sequence is WGEFE. The segment at 163–227 is interaction with MLLT10; that stretch reads LGAYKHETEF…LEEDDQAKDI (65 aa). The segment at 168 to 227 is interaction with TACC1; that stretch reads HETEFAELEVKTREKLEAAKKKTSFEIAELKERLKASRETINCLKNEIRKLEEDDQAKDI. A coiled-coil region spans residues 178–226; that stretch reads KTREKLEAAKKKTSFEIAELKERLKASRETINCLKNEIRKLEEDDQAKD.

Component of numerous complexes with chromatin remodeling and histone acetyltransferase activity. Component of the NuA4 histone acetyltransferase complex which contains the catalytic subunit KAT5/TIP60 and the subunits EP400, TRRAP/PAF400, BRD8/SMAP, EPC1, DMAP1/DNMAP1, RUVBL1/TIP49, RUVBL2, ING3, actin, ACTL6A/BAF53A, MORF4L1/MRG15, MORF4L2/MRGX, MRGBP, YEATS4/GAS41, VPS72/YL1 and MEAF6. The NuA4 complex interacts with MYC and the adenovirus E1A protein. Component of a NuA4-related complex which contains EP400, TRRAP/PAF400, SRCAP, BRD8/SMAP, EPC1, DMAP1/DNMAP1, RUVBL1/TIP49, RUVBL2, actin, ACTL6A/BAF53A, VPS72 and YEATS4/GAS41. Interacts with MLLT10/AF10. Also interacts with the SWI/SNF component SMARCB1/BAF47, TACC1 and TACC2, and the nuclear matrix protein NUMA1. As to expression, expressed in brain, heart, kidney, liver, lung, pancreas, placenta and skeletal muscle.

It is found in the nucleus. Chromatin reader component of the NuA4 histone acetyltransferase (HAT) complex, a complex involved in transcriptional activation of select genes principally by acetylation of nucleosomal histones H4 and H2A. Specifically recognizes and binds acylated histone H3, with a preference for histone H3 diacetylated at 'Lys-18' and 'Lys-27' (H3K18ac and H3K27ac) or histone H3 diacetylated at 'Lys-14' and 'Lys-27' (H3K14ac and H3K27ac). Also able to recognize and bind crotonylated histone H3. May also recognize and bind histone H3 succinylated at 'Lys-122' (H3K122succ); additional evidences are however required to confirm this result in vivo. Plays a key role in histone variant H2AZ1/H2A.Z deposition into specific chromatin regions: recognizes and binds H3K14ac and H3K27ac on the promoters of actively transcribed genes and recruits NuA4-related complex to deposit H2AZ1/H2A.Z. H2AZ1/H2A.Z deposition is required for maintenance of embryonic stem cell. In Homo sapiens (Human), this protein is YEATS domain-containing protein 4.